The primary structure comprises 786 residues: DENN domain-containing protein 1C (786 aa).

The region spanning F13–E158 is the uDENN domain. The cDENN domain maps to S182–R318. The region spanning V320 to G398 is the dDENN domain. The FXDXF motif signature appears at F401 to F405. Residues K481–W553 form a disordered region. The span at L527 to S541 shows a compositional bias: basic and acidic residues. Over residues P542 to P552 the composition is skewed to polar residues. S565 is modified (phosphoserine). The Clathrin box signature appears at D570–L579. Disordered stretches follow at residues Y653–Q741 and S762–N786. Residues S657 to S675 are compositionally biased toward low complexity. Residues L706–P740 show a composition bias toward polar residues. Basic and acidic residues predominate over residues P770–N786.

Exhibits low nucleotide-independent RAB35-binding activity. Interacts with clathrin heavy chain/CLTC and with AP2A2, but not with AP2B1.

It localises to the cytoplasm. Its subcellular location is the cytosol. It is found in the cytoplasmic vesicle. The protein localises to the clathrin-coated vesicle. Guanine nucleotide exchange factor (GEF) which may activate RAB8A, RAB13 and RAB35. Promotes the exchange of GDP to GTP, converting inactive GDP-bound Rab proteins into their active GTP-bound form. The polypeptide is DENN domain-containing protein 1C (Dennd1c) (Mus musculus (Mouse)).